Reading from the N-terminus, the 237-residue chain is Protein GrpE (237 aa).

2 disordered regions span residues 27 to 51 (EDRE…LSET) and 202 to 237 (AVSS…PQHS). Low complexity-rich tracts occupy residues 33–45 (ASTS…AEAS) and 204–213 (SSGSPTSEPS). Positions 227–237 (TPASPQNPQHS) are enriched in polar residues.

The protein belongs to the GrpE family. As to quaternary structure, homodimer.

The protein localises to the cytoplasm. Participates actively in the response to hyperosmotic and heat shock by preventing the aggregation of stress-denatured proteins, in association with DnaK and GrpE. It is the nucleotide exchange factor for DnaK and may function as a thermosensor. Unfolded proteins bind initially to DnaJ; upon interaction with the DnaJ-bound protein, DnaK hydrolyzes its bound ATP, resulting in the formation of a stable complex. GrpE releases ADP from DnaK; ATP binding to DnaK triggers the release of the substrate protein, thus completing the reaction cycle. Several rounds of ATP-dependent interactions between DnaJ, DnaK and GrpE are required for fully efficient folding. The polypeptide is Protein GrpE (Synechococcus sp. (strain JA-3-3Ab) (Cyanobacteria bacterium Yellowstone A-Prime)).